A 68-amino-acid chain; its full sequence is Conotoxin Ar5.3 (68 aa).

Positions 1–19 (MLCLPVFIILLLLASPAAS) are cleaved as a signal peptide. Residues 20–53 (NPLEKRIQNDLIRAALEDADMENDPRSIIDSVKT) constitute a propeptide that is removed on maturation.

Belongs to the conotoxin T superfamily. In terms of processing, contains 2 disulfide bonds that can be either 'C1-C3, C2-C4' or 'C1-C4, C2-C3', since these disulfide connectivities have been observed for conotoxins with cysteine framework V (for examples, see AC P0DQQ7 and AC P81755). In terms of tissue distribution, expressed by the venom duct.

It is found in the secreted. This Conus arenatus (Sand-dusted cone) protein is Conotoxin Ar5.3.